Consider the following 160-residue polypeptide: Ribosomal RNA large subunit methyltransferase H (160 aa).

The S-adenosyl-L-methionine site is built by leucine 76 and glycine 108.

The protein belongs to the RNA methyltransferase RlmH family. Homodimer.

It localises to the cytoplasm. It carries out the reaction pseudouridine(1915) in 23S rRNA + S-adenosyl-L-methionine = N(3)-methylpseudouridine(1915) in 23S rRNA + S-adenosyl-L-homocysteine + H(+). Specifically methylates the pseudouridine at position 1915 (m3Psi1915) in 23S rRNA. The protein is Ribosomal RNA large subunit methyltransferase H of Xanthobacter autotrophicus (strain ATCC BAA-1158 / Py2).